Here is a 34-residue protein sequence, read N- to C-terminus: Photosystem II reaction center protein M (34 aa).

A helical membrane pass occupies residues 7–27; it reads GFVASLLFVLVPTVFLIILFI.

This sequence belongs to the PsbM family. In terms of assembly, PSII is composed of 1 copy each of membrane proteins PsbA, PsbB, PsbC, PsbD, PsbE, PsbF, PsbH, PsbI, PsbJ, PsbK, PsbL, PsbM, PsbT, PsbX, PsbY, PsbZ, Psb30/Ycf12, peripheral proteins PsbO, CyanoQ (PsbQ), PsbU, PsbV and a large number of cofactors. It forms dimeric complexes.

Its subcellular location is the cellular thylakoid membrane. Its function is as follows. One of the components of the core complex of photosystem II (PSII). PSII is a light-driven water:plastoquinone oxidoreductase that uses light energy to abstract electrons from H(2)O, generating O(2) and a proton gradient subsequently used for ATP formation. It consists of a core antenna complex that captures photons, and an electron transfer chain that converts photonic excitation into a charge separation. This subunit is found at the monomer-monomer interface. The protein is Photosystem II reaction center protein M of Synechococcus sp. (strain WH7803).